The chain runs to 199 residues: Chaperone protein TorD (199 aa).

Belongs to the TorD/DmsD family. TorD subfamily.

Its subcellular location is the cytoplasm. In terms of biological role, involved in the biogenesis of TorA. Acts on TorA before the insertion of the molybdenum cofactor and, as a result, probably favors a conformation of the apoenzyme that is competent for acquiring the cofactor. The protein is Chaperone protein TorD of Escherichia coli O6:H1 (strain CFT073 / ATCC 700928 / UPEC).